A 332-amino-acid chain; its full sequence is rRNA biogenesis protein rrp-36 (332 aa).

4 disordered regions span residues 1–91 (MPAV…ASQL), 104–196 (GALK…SGKS), 243–262 (SMES…ELLS), and 312–332 (KKIA…AEDR). Composition is skewed to acidic residues over residues 27–45 (EPDS…EEEG), 53–77 (DTEE…DSDA), and 117–127 (EDGSDDDEEKE). Composition is skewed to basic and acidic residues over residues 128–142 (EPNW…MKAK) and 165–183 (RRRD…RDPR). The stretch at 212–274 (DYQEDEMKQL…KKKEKELIKQ (63 aa)) forms a coiled coil. The span at 315-332 (AGKEKKALPLARRTAEDR) shows a compositional bias: basic and acidic residues.

The protein belongs to the RRP36 family. Associates with 90S and pre-40S pre-ribosomal particles.

The protein localises to the nucleus. Its subcellular location is the nucleolus. Component of the 90S pre-ribosome involved in the maturation of rRNAs. Required for early cleavages of the pre-RNAs in the 40S ribosomal subunit maturation pathway. This is rRNA biogenesis protein rrp-36 (rrp-36) from Neurospora crassa (strain ATCC 24698 / 74-OR23-1A / CBS 708.71 / DSM 1257 / FGSC 987).